Here is a 277-residue protein sequence, read N- to C-terminus: Zinc transporter ZupT (277 aa).

The next 8 membrane-spanning stretches (helical) occupy residues 7–27 (VLLAFGLTLFAGLATGVGSAI), 38–58 (FLAVALGFSAGVMIYVSFVEI), 73–93 (VLASWYTVAAFFSGALLIAVI), 133–155 (AGVLAAVAIGIHNFPEGLAAFSA), 165–187 (AIAVAIAIHNIPEGMAVSVPIYY), 196–216 (FLYSFLSGVSEPIGALVGYVV), 220–240 (FFTPMVFGLLFASVAGIMVYI), and 257–277 (LCILGVFSGMGVMALSLLLFL). Residues N145 and E148 each coordinate Fe(2+). E148 and H173 together coordinate Zn(2+). The Fe(2+) site is built by N174, E177, and E206. Residue E177 coordinates Zn(2+).

The protein belongs to the ZIP transporter (TC 2.A.5) family. ZupT subfamily.

Its subcellular location is the cell inner membrane. The enzyme catalyses Zn(2+)(in) = Zn(2+)(out). Its function is as follows. Mediates zinc uptake. May also transport other divalent cations. The chain is Zinc transporter ZupT from Nitratidesulfovibrio vulgaris (strain ATCC 29579 / DSM 644 / CCUG 34227 / NCIMB 8303 / VKM B-1760 / Hildenborough) (Desulfovibrio vulgaris).